Consider the following 45-residue polypeptide: Mu-conotoxin-like Cal 12.1.2c (45 aa).

Intrachain disulfides connect cysteine 3–cysteine 16, cysteine 11–cysteine 28, cysteine 18–cysteine 33, and cysteine 27–cysteine 39. Residue proline 23 is modified to 4-hydroxyproline. 6'-bromotryptophan occurs at positions 37 and 38. Proline 40 carries the 4-hydroxyproline modification. Tryptophan 44 carries the post-translational modification 6'-bromotryptophan.

In terms of tissue distribution, expressed by the venom duct.

It localises to the secreted. Mu-conotoxins block voltage-gated sodium channels. This toxin reversibly blocks voltage-gated sodium channel in cephalopods, with no alteration in the voltage dependence of sodium conductance or on the kinetics of inactivation. The sequence is that of Mu-conotoxin-like Cal 12.1.2c from Californiconus californicus (California cone).